The primary structure comprises 489 residues: Betaine aldehyde dehydrogenase (489 aa).

K(+) contacts are provided by T26 and D93. 150–152 (GAW) lines the NAD(+) pocket. The active-site Charge relay system is the K162. 176 to 179 (KPSE) lines the NAD(+) pocket. V180 serves as a coordination point for K(+). Residue 229-232 (GVET) participates in NAD(+) binding. Residue L245 coordinates K(+). E251 serves as the catalytic Proton acceptor. The NAD(+) site is built by G253, C285, and E386. C285 functions as the Nucleophile in the catalytic mechanism. C285 is subject to Cysteine sulfenic acid (-SOH). 2 residues coordinate K(+): K456 and G459. The active-site Charge relay system is E463.

Belongs to the aldehyde dehydrogenase family. As to quaternary structure, dimer of dimers. The cofactor is K(+).

It carries out the reaction betaine aldehyde + NAD(+) + H2O = glycine betaine + NADH + 2 H(+). The protein operates within amine and polyamine biosynthesis; betaine biosynthesis via choline pathway; betaine from betaine aldehyde: step 1/1. Its function is as follows. Involved in the biosynthesis of the osmoprotectant glycine betaine. Catalyzes the irreversible oxidation of betaine aldehyde to the corresponding acid. The sequence is that of Betaine aldehyde dehydrogenase from Burkholderia pseudomallei (strain 1106a).